A 97-amino-acid polypeptide reads, in one-letter code: UPF0250 protein RSc0326 (97 aa).

The protein belongs to the UPF0250 family.

This Ralstonia nicotianae (strain ATCC BAA-1114 / GMI1000) (Ralstonia solanacearum) protein is UPF0250 protein RSc0326.